Reading from the N-terminus, the 204-residue chain is Double homeobox protein A (204 aa).

Positions 15-74 (HRRCRTKFTEEQLKILINTFNQKPYPGYATKQKLALEINTEESRIQIWFQNRRARHGFQK) form a DNA-binding region, homeobox 1. Disordered stretches follow at residues 73–101 (QKRPEAETLESSQSQGQDQPGVEFQSREA) and 163–204 (EPVA…ARTW). The segment covering 81–90 (LESSQSQGQD) has biased composition (polar residues). The homeobox 2 DNA-binding region spans 101 to 160 (ARRCRTTYSASQLHTLIKAFMKNPYPGIDSREELAKEIGVPESRVQIWFQNRRSRLLLQR). The segment covering 184–197 (EDTQNGTNFTSDSH) has biased composition (polar residues).

This sequence belongs to the paired homeobox family. Expressed in embryonic stem cells.

The protein resides in the nucleus. Its function is as follows. Transcription factor that acts as a repressor. The sequence is that of Double homeobox protein A from Homo sapiens (Human).